The chain runs to 498 residues: Galactose-1-phosphate uridylyltransferase (498 aa).

It belongs to the galactose-1-phosphate uridylyltransferase type 2 family.

Its subcellular location is the cytoplasm. The enzyme catalyses alpha-D-galactose 1-phosphate + UDP-alpha-D-glucose = alpha-D-glucose 1-phosphate + UDP-alpha-D-galactose. It functions in the pathway carbohydrate metabolism; galactose metabolism. In Latilactobacillus sakei subsp. sakei (strain 23K) (Lactobacillus sakei subsp. sakei), this protein is Galactose-1-phosphate uridylyltransferase.